Here is a 663-residue protein sequence, read N- to C-terminus: Methionine--tRNA ligase (663 aa).

The 'HIGH' region motif lies at 10–20 (AYTNGPLHLGH). The Zn(2+) site is built by Cys142, Cys145, Cys154, and Cys157. The 'KMSKS' region motif lies at 323–327 (KMSTS). Thr326 provides a ligand contact to ATP. The tRNA-binding domain maps to 563 to 663 (YFGNVDLRVG…RDLPVGSKIH (101 aa)).

The protein belongs to the class-I aminoacyl-tRNA synthetase family. MetG type 1 subfamily. Homodimer. Requires Zn(2+) as cofactor.

The protein resides in the cytoplasm. It carries out the reaction tRNA(Met) + L-methionine + ATP = L-methionyl-tRNA(Met) + AMP + diphosphate. Functionally, is required not only for elongation of protein synthesis but also for the initiation of all mRNA translation through initiator tRNA(fMet) aminoacylation. This is Methionine--tRNA ligase from Methanococcus maripaludis (strain C7 / ATCC BAA-1331).